Consider the following 437-residue polypeptide: Glutamate-1-semialdehyde 2,1-aminomutase (437 aa).

Position 273 is an N6-(pyridoxal phosphate)lysine (lysine 273).

This sequence belongs to the class-III pyridoxal-phosphate-dependent aminotransferase family. HemL subfamily. Homodimer. Pyridoxal 5'-phosphate is required as a cofactor.

Its subcellular location is the cytoplasm. The catalysed reaction is (S)-4-amino-5-oxopentanoate = 5-aminolevulinate. It functions in the pathway porphyrin-containing compound metabolism; protoporphyrin-IX biosynthesis; 5-aminolevulinate from L-glutamyl-tRNA(Glu): step 2/2. In Chlamydia caviae (strain ATCC VR-813 / DSM 19441 / 03DC25 / GPIC) (Chlamydophila caviae), this protein is Glutamate-1-semialdehyde 2,1-aminomutase.